Consider the following 48-residue polypeptide: ATP synthase protein 8 (48 aa).

Residues 13–35 form a helical membrane-spanning segment; sequence LTYGFTFILTILFLTSYVFLPMI.

The protein belongs to the ATPase protein 8 family. In terms of assembly, F-type ATPases have 2 components, CF(1) - the catalytic core - and CF(0) - the membrane proton channel. In yeast, the dimeric form of ATP synthase consists of 18 polypeptides: alpha, beta, gamma, delta, epsilon, 4 (B), 5 (OSCP), 6 (A), 8, 9 (C), d, E (Tim11), f, g, h, i, j and k.

The protein localises to the mitochondrion membrane. Its function is as follows. Mitochondrial membrane ATP synthase (F(1)F(0) ATP synthase or Complex V) produces ATP from ADP in the presence of a proton gradient across the membrane which is generated by electron transport complexes of the respiratory chain. F-type ATPases consist of two structural domains, F(1) - containing the extramembraneous catalytic core and F(0) - containing the membrane proton channel, linked together by a central stalk and a peripheral stalk. During catalysis, ATP synthesis in the catalytic domain of F(1) is coupled via a rotary mechanism of the central stalk subunits to proton translocation. Part of the complex F(0) domain. Minor subunit located with subunit a in the membrane. The chain is ATP synthase protein 8 (ATP8) from Eremothecium gossypii (strain ATCC 10895 / CBS 109.51 / FGSC 9923 / NRRL Y-1056) (Yeast).